A 465-amino-acid chain; its full sequence is Ribulose bisphosphate carboxylase large chain (465 aa).

Residue lysine 4 is modified to N6,N6,N6-trimethyllysine. 2 residues coordinate substrate: asparagine 113 and threonine 163. Lysine 165 functions as the Proton acceptor in the catalytic mechanism. Lysine 167 provides a ligand contact to substrate. Mg(2+) is bound by residues lysine 191, aspartate 193, and glutamate 194. Lysine 191 is modified (N6-carboxylysine). The active-site Proton acceptor is histidine 284. Residues arginine 285, histidine 317, and serine 369 each contribute to the substrate site.

The protein belongs to the RuBisCO large chain family. Type I subfamily. In terms of assembly, heterohexadecamer of 8 large chains and 8 small chains; disulfide-linked. The disulfide link is formed within the large subunit homodimers. Mg(2+) serves as cofactor. In terms of processing, the disulfide bond which can form in the large chain dimeric partners within the hexadecamer appears to be associated with oxidative stress and protein turnover.

The protein resides in the plastid. Its subcellular location is the chloroplast. The enzyme catalyses 2 (2R)-3-phosphoglycerate + 2 H(+) = D-ribulose 1,5-bisphosphate + CO2 + H2O. The catalysed reaction is D-ribulose 1,5-bisphosphate + O2 = 2-phosphoglycolate + (2R)-3-phosphoglycerate + 2 H(+). Functionally, ruBisCO catalyzes two reactions: the carboxylation of D-ribulose 1,5-bisphosphate, the primary event in carbon dioxide fixation, as well as the oxidative fragmentation of the pentose substrate in the photorespiration process. Both reactions occur simultaneously and in competition at the same active site. This is Ribulose bisphosphate carboxylase large chain from Epacris sp.